We begin with the raw amino-acid sequence, 313 residues long: Acetaldehyde dehydrogenase 3 (313 aa).

13 to 16 (SGNI) provides a ligand contact to NAD(+). Cys133 acts as the Acyl-thioester intermediate in catalysis. Residues 164–172 (SAGPGTRAN) and Asn291 contribute to the NAD(+) site.

It belongs to the acetaldehyde dehydrogenase family.

It carries out the reaction acetaldehyde + NAD(+) + CoA = acetyl-CoA + NADH + H(+). In Paraburkholderia xenovorans (strain LB400), this protein is Acetaldehyde dehydrogenase 3.